The sequence spans 283 residues: Phosphatidylglycerol--prolipoprotein diacylglyceryl transferase (283 aa).

4 consecutive transmembrane segments (helical) span residues 17–37, 56–76, 92–112, and 117–137; these read LAVR…TFLG, FLTW…VLFY, WEGG…IWLF, and GIGF…GLAS. Arg-139 contacts a 1,2-diacyl-sn-glycero-3-phospho-(1'-sn-glycerol). Transmembrane regions (helical) follow at residues 194–214, 222–242, and 255–275; these read PSQL…VWLF, GQVA…AEFA, and GLSM…VGFV.

The protein belongs to the Lgt family.

It is found in the cell inner membrane. The catalysed reaction is L-cysteinyl-[prolipoprotein] + a 1,2-diacyl-sn-glycero-3-phospho-(1'-sn-glycerol) = an S-1,2-diacyl-sn-glyceryl-L-cysteinyl-[prolipoprotein] + sn-glycerol 1-phosphate + H(+). Its pathway is protein modification; lipoprotein biosynthesis (diacylglyceryl transfer). Its function is as follows. Catalyzes the transfer of the diacylglyceryl group from phosphatidylglycerol to the sulfhydryl group of the N-terminal cysteine of a prolipoprotein, the first step in the formation of mature lipoproteins. The sequence is that of Phosphatidylglycerol--prolipoprotein diacylglyceryl transferase from Neisseria meningitidis serogroup C (strain 053442).